A 929-amino-acid chain; its full sequence is Protocadherin gamma-B7 (929 aa).

The N-terminal stretch at 1–30 (MGGSCAQRRRAGPRQVLFPLLLPLFYPTLC) is a signal peptide. Cadherin domains are found at residues 31-133 (EPIR…APQF), 134-242 (QKDE…PPVF), 243-347 (SQDV…SPEI), 348-452 (IITS…APVF), 453-562 (GQSA…APRV), and 570-675 (DGSA…LPDF). Residues 31–691 (EPIRYSIPEE…SDSQAEMQFY (661 aa)) are Extracellular-facing. Residues Asn-419 and Asn-545 are each glycosylated (N-linked (GlcNAc...) asparagine). A helical membrane pass occupies residues 692–712 (LVVALALISVLFLLAVILAIA). Residues 713–929 (LRLRQSFSPT…KKKSGKKEKK (217 aa)) lie on the Cytoplasmic side of the membrane. Disordered regions lie at residues 806–838 (QAPPNTDWRFSQAQRPGTSGSQNGDDTGTWPNN) and 899–929 (ATLTNAAGKRDGKAPAGGNGNKKKSGKKEKK). A compositionally biased stretch (polar residues) spans 807–838 (APPNTDWRFSQAQRPGTSGSQNGDDTGTWPNN). A compositionally biased stretch (basic residues) spans 919–929 (NKKKSGKKEKK).

The protein localises to the cell membrane. Potential calcium-dependent cell-adhesion protein. May be involved in the establishment and maintenance of specific neuronal connections in the brain. In Pan troglodytes (Chimpanzee), this protein is Protocadherin gamma-B7 (PCDHGB7).